An 85-amino-acid polypeptide reads, in one-letter code: Putative regulatory protein DICTH_1339 (85 aa).

It belongs to the RemA family.

The chain is Putative regulatory protein DICTH_1339 from Dictyoglomus thermophilum (strain ATCC 35947 / DSM 3960 / H-6-12).